Consider the following 256-residue polypeptide: Trypsinogen-like protein 3 (256 aa).

An N-terminal signal peptide occupies residues 1 to 14 (MILLLVLALGLAGA). In terms of domain architecture, Peptidase S1 spans 15–237 (SPLGEYKECP…YNDWIHQVMA (223 aa)). Cystine bridges form between cysteine 23–cysteine 153, cysteine 41–cysteine 57, cysteine 125–cysteine 226, cysteine 132–cysteine 199, cysteine 164–cysteine 180, and cysteine 189–cysteine 213.

Belongs to the peptidase S1 family.

This is Trypsinogen-like protein 3 (trp3) from Pseudopleuronectes americanus (Winter flounder).